Here is a 276-residue protein sequence, read N- to C-terminus: 4-chlorobenzoyl coenzyme A dehalogenase-1 (276 aa).

A substrate-binding site is contributed by 66 to 71; that stretch reads AGFDLE. The Proton acceptor role is filled by His-93. Residue Gly-117 coordinates substrate. Catalysis depends on Asp-148, which acts as the Nucleophile. Arg-261 serves as a coordination point for substrate.

Belongs to the enoyl-CoA hydratase/isomerase family. Homotetramer.

The catalysed reaction is 4-chlorobenzoyl-CoA + H2O = 4-hydroxybenzoyl-CoA + chloride + H(+). It functions in the pathway xenobiotic degradation; 4-chlorobenzoate degradation; 4-hydroxybenzoate from 4-chlorobenzoate: step 2/3. Functionally, dehalogenates 4-chlorobenzoyl-CoA, 4-iodobenzoyl-CoA, 4-bromobenzoyl-CoA and, at a slower rate, 4-fluorobenzoyl-CoA. Does not dehalogenate 2-chlorobenzoyl-CoA or 3-chlorobenzoyl-CoA. This chain is 4-chlorobenzoyl coenzyme A dehalogenase-1, found in Arthrobacter sp.